A 471-amino-acid polypeptide reads, in one-letter code: V-type ATP synthase beta chain (471 aa).

It belongs to the ATPase alpha/beta chains family.

Functionally, produces ATP from ADP in the presence of a proton gradient across the membrane. The V-type beta chain is a regulatory subunit. This is V-type ATP synthase beta chain from Streptococcus pyogenes serotype M49 (strain NZ131).